The following is a 144-amino-acid chain: Augurin-B (144 aa).

The first 18 residues, 1–18 (MSLHSLCVPTILLISVLS), serve as a signal peptide directing secretion. Positions 19–68 (ICLSSGGSSDSKLHRILIKRDAKEIESRPKAYISVQQSKAKEFLSGLHRT) are excised as a propeptide. Positions 109–144 (RSNDQGRQHHHDENAPMSQQDPRYNRHGANVNYDYY) are disordered. Residues 112–122 (DQGRQHHHDEN) show a composition bias toward basic and acidic residues.

The protein belongs to the augurin family.

It is found in the secreted. The protein localises to the cytoplasm. It localises to the apical cell membrane. In terms of biological role, probable hormone. Required for the proper formation of the central nervous system by attenuating cell proliferation during development. The protein is Augurin-B of Danio rerio (Zebrafish).